The sequence spans 521 residues: Probable cytochrome P450 12d1 proximal, mitochondrial (521 aa).

The transit peptide at Met1–Ser19 directs the protein to the mitochondrion. Cys467 serves as a coordination point for heme.

This sequence belongs to the cytochrome P450 family. Heme is required as a cofactor.

Its subcellular location is the mitochondrion membrane. The sequence is that of Probable cytochrome P450 12d1 proximal, mitochondrial (Cyp12d1-p) from Drosophila melanogaster (Fruit fly).